Reading from the N-terminus, the 645-residue chain is DNA ligase (645 aa).

NAD(+) contacts are provided by residues 30–34, 79–80, and Glu-106; these read DIEYD and SM. Lys-108 serves as the catalytic N6-AMP-lysine intermediate. NAD(+) is bound by residues Arg-129, Glu-163, and Lys-302. Zn(2+) is bound by residues Cys-396, Cys-399, Cys-412, and Cys-417. In terms of domain architecture, BRCT spans 570–645; it reads ISQNVFTKKT…ISEDEFKEML (76 aa).

This sequence belongs to the NAD-dependent DNA ligase family. LigA subfamily. The cofactor is Mg(2+). Requires Mn(2+) as cofactor.

The enzyme catalyses NAD(+) + (deoxyribonucleotide)n-3'-hydroxyl + 5'-phospho-(deoxyribonucleotide)m = (deoxyribonucleotide)n+m + AMP + beta-nicotinamide D-nucleotide.. In terms of biological role, DNA ligase that catalyzes the formation of phosphodiester linkages between 5'-phosphoryl and 3'-hydroxyl groups in double-stranded DNA using NAD as a coenzyme and as the energy source for the reaction. It is essential for DNA replication and repair of damaged DNA. The sequence is that of DNA ligase from Campylobacter hominis (strain ATCC BAA-381 / DSM 21671 / CCUG 45161 / LMG 19568 / NCTC 13146 / CH001A).